A 390-amino-acid chain; its full sequence is MKIRQVRALTVTGGGADYHDQAEDHWIDDHVATPMAKYPEYRASRQAFGINVLGTLVVEVEAEDGTVGVGVTTAGEPGAYIVEKHLARFVEGASVTDVEKIWDQMFNATLYYGRKGLVLNAISAVDLALYDLLGKIRQEPVYALLGGPVRDELQCYATTGRPDVAKELGFLGGKMTLQHGPAEGVEGLHANIERLRKMREQVGPDFWLMFDCWMALDVEYATRLAHAAAEYDLKWLEEALIPDDYWGYGELRRRMPSTMLMTTGEHEHTRYGFRLLLEMGRPDIIQPDVNWCGGITELIKISALADAHGAMVVPHGSSVYSYHFVITRHNSPFTEFLMMHPQATEVVPMFSPLLLDEPVPVGGRLRLPETPGFGVRLNPEVELRRPYDHD.

Residues His-19 and Arg-45 each coordinate substrate. Mg(2+) contacts are provided by Asp-211, Glu-237, and Glu-265. His-315 functions as the Proton acceptor in the catalytic mechanism. Glu-335 serves as a coordination point for substrate.

Belongs to the mandelate racemase/muconate lactonizing enzyme family. RhamD subfamily. Requires Mg(2+) as cofactor.

The catalysed reaction is L-rhamnonate = 2-dehydro-3-deoxy-L-rhamnonate + H2O. Functionally, catalyzes the dehydration of L-rhamnonate to 2-keto-3-deoxy-L-rhamnonate (KDR). The chain is L-rhamnonate dehydratase from Saccharopolyspora erythraea (strain ATCC 11635 / DSM 40517 / JCM 4748 / NBRC 13426 / NCIMB 8594 / NRRL 2338).